Reading from the N-terminus, the 391-residue chain is ATPase GET3C (391 aa).

A mitochondrion-targeting transit peptide spans 1 to 50 (MAALLLLNRVSRSTSSISLHRVAGTLGFNSFNAQIHGDRISGTLFRVRSL). 77–84 (KGGVGKTS) provides a ligand contact to ATP. Asp106 is an active-site residue. ATP is bound at residue Asn328.

The protein belongs to the arsA ATPase family.

The protein localises to the mitochondrion matrix. It carries out the reaction ATP + H2O = ADP + phosphate + H(+). This Arabidopsis thaliana (Mouse-ear cress) protein is ATPase GET3C.